Reading from the N-terminus, the 190-residue chain is GTP cyclohydrolase 1 (190 aa).

3 residues coordinate Zn(2+): Cys80, His83, and Cys151.

This sequence belongs to the GTP cyclohydrolase I family. As to quaternary structure, toroid-shaped homodecamer, composed of two pentamers of five dimers.

It catalyses the reaction GTP + H2O = 7,8-dihydroneopterin 3'-triphosphate + formate + H(+). It functions in the pathway cofactor biosynthesis; 7,8-dihydroneopterin triphosphate biosynthesis; 7,8-dihydroneopterin triphosphate from GTP: step 1/1. This Rickettsia akari (strain Hartford) protein is GTP cyclohydrolase 1.